Consider the following 412-residue polypeptide: Argininosuccinate synthase (412 aa).

ATP contacts are provided by residues 16–24 and Ala44; that span reads AYSGGLDTS. Positions 96 and 101 each coordinate L-citrulline. Gly126 lines the ATP pocket. L-aspartate is bound by residues Thr128, Asn132, and Asp133. Asn132 contributes to the L-citrulline binding site. L-citrulline-binding residues include Arg136, Ser185, Ser194, Glu270, and Tyr282.

This sequence belongs to the argininosuccinate synthase family. Type 1 subfamily. As to quaternary structure, homotetramer.

It is found in the cytoplasm. It carries out the reaction L-citrulline + L-aspartate + ATP = 2-(N(omega)-L-arginino)succinate + AMP + diphosphate + H(+). It participates in amino-acid biosynthesis; L-arginine biosynthesis; L-arginine from L-ornithine and carbamoyl phosphate: step 2/3. The sequence is that of Argininosuccinate synthase from Shewanella baltica (strain OS185).